We begin with the raw amino-acid sequence, 488 residues long: Dipeptide and tripeptide permease B (488 aa).

Residues 1–27 are Cytoplasmic-facing; the sequence is MSKTASVGLWDQPKPFFMIFFVELWER. A helical membrane pass occupies residues 28-48; sequence FGFYGVQGILAIYFVQQLGFS. The Periplasmic portion of the chain corresponds to 49–52; that stretch reads EEQS. Residues 53 to 73 form a helical membrane-spanning segment; that stretch reads FITFGAFTALVYGLISVGGYV. Residues 74–82 lie on the Cytoplasmic side of the membrane; the sequence is GDHILGTKR. The helical transmembrane segment at 83–103 threads the bilayer; the sequence is TIVLGAIVMAIGYYMIGLSIM. Topologically, residues 104–106 are periplasmic; sequence KPE. Residues 107-127 form a helical membrane-spanning segment; sequence LIFYALGTVAVGNGLFKANPA. Residues 128–146 are Cytoplasmic-facing; it reads SLLAKCYQPQDPRLDGAFT. Residues 147-167 traverse the membrane as a helical segment; that stretch reads LFYMSINLGSLFSLSLAPVIA. Residues 168–172 are Periplasmic-facing; that stretch reads EKYGY. The chain crosses the membrane as a helical span at residues 173 to 193; it reads TVTYNICGIGLIIALLVYIAC. At 194–211 the chain is on the cytoplasmic side; sequence RRMVHNIGSAPDHHPVKP. A helical membrane pass occupies residues 212-232; the sequence is IGLIAVLIGSVVMVGVCAWLL. At 233-234 the chain is on the periplasmic side; it reads HN. Residues 235-255 form a helical membrane-spanning segment; the sequence is IKVANIALFAITTIVVLIFFW. Topologically, residues 256–267 are cytoplasmic; it reads QAFKQNRVGRNK. Residues 268–288 traverse the membrane as a helical segment; sequence MFVAFILMLQAVVFFILYNQM. Over 289 to 311 the chain is Periplasmic; it reads PMSLNFFAINNVHHQILGFDVNP. A helical transmembrane segment spans residues 312 to 332; sequence VSFQAFNPFWIIIVSPILAVV. Residues 333–348 lie on the Cytoplasmic side of the membrane; that stretch reads YTKLGAKGKDFSMPAK. Residues 349-369 form a helical membrane-spanning segment; the sequence is FTFGMFLCSLGFLTAAASGLF. At 370 to 378 the chain is on the periplasmic side; sequence ADAQGITSP. Residues 379-399 traverse the membrane as a helical segment; the sequence is WFIVLVYLFQSVGELMISALG. Over 400–423 the chain is Cytoplasmic; the sequence is LAMVAAFVPSYLTGFILGMWFLSQ. Residues 424-444 form a helical membrane-spanning segment; that stretch reads AVASMLASHVAALTATPVGVT. At 445-455 the chain is on the periplasmic side; that stretch reads DPLQTLPIYMS. A helical membrane pass occupies residues 456–476; sequence VFGKIGVATLIVAIIMTFMVP. Topologically, residues 477–488 are cytoplasmic; that stretch reads WLNRIMREEVKA.

It belongs to the major facilitator superfamily. Proton-dependent oligopeptide transporter (POT/PTR) (TC 2.A.17) family. DtpB subfamily.

The protein resides in the cell inner membrane. Functionally, proton-dependent permease that transports di- and tripeptides. The protein is Dipeptide and tripeptide permease B of Xenorhabdus bovienii (strain SS-2004) (Xenorhabdus nematophila subsp. bovienii).